Reading from the N-terminus, the 157-residue chain is Endosomal/vacuolar adapter protein YPT35 (157 aa).

The PX domain maps to 43–157; the sequence is ITDVLVGDYH…SPVITHFILN (115 aa).

It belongs to the YPT35 family.

The protein localises to the endosome membrane. It is found in the vacuole membrane. Its function is as follows. Recruits the lipid transfer protein VPS13 to endosomal and vacuolar membranes. The polypeptide is Endosomal/vacuolar adapter protein YPT35 (YPT35) (Debaryomyces hansenii (strain ATCC 36239 / CBS 767 / BCRC 21394 / JCM 1990 / NBRC 0083 / IGC 2968) (Yeast)).